An 83-amino-acid polypeptide reads, in one-letter code: Small ribosomal subunit protein eS21 (83 aa).

It belongs to the eukaryotic ribosomal protein eS21 family. In terms of assembly, component of the 40S small ribosomal subunit.

It is found in the cytoplasm. It localises to the cytosol. The protein resides in the rough endoplasmic reticulum. This is Small ribosomal subunit protein eS21 (RpS21) from Ixodes scapularis (Black-legged tick).